A 192-amino-acid polypeptide reads, in one-letter code: Ras-like GTP-binding protein Rho1 (192 aa).

Residue 12 to 19 coordinates GTP; the sequence is GDGACGKT. The Effector region motif lies at 34 to 42; sequence YVPTVFENY. GTP-binding positions include 59–63 and 117–120; these read DTAGQ and NKKD. Cysteine methyl ester is present on Cys-189. Residue Cys-189 is the site of S-geranylgeranyl cysteine attachment. A propeptide spans 190-192 (removed in mature form); that stretch reads LLL.

This sequence belongs to the small GTPase superfamily. Rho family. In terms of assembly, interacts with capu. Interacts (via REM repeats) with Pkn (via N-terminus). Interacts (via N-terminus) with wash (via N-terminus). May interact with dia/diaphanous (via CBD/FH3 domain). Expressed in hemocytes (at protein level).

The protein resides in the cell membrane. The protein localises to the cytoplasm. It is found in the cytoskeleton. Its subcellular location is the apical cell membrane. It localises to the lateral cell membrane. In terms of biological role, has a role in regulating actin cytoskeletal organization: required during early development for proper execution of morphogenetic movements of individual cells and groups of cells important for the formation of the embryonic body plan. Plays a role in regulating dorsal closure during embryogenesis. During axis elongation, required for Rho-kinase Rok planar polarity and adherens junction localization as well as for generating a planar polarized distribution of the actin-binding protein Shrm. During embryogenesis, acts upstream of wash to regulate the developmental migration of tail hemocytes anteriorly along the ventral midline. May have a role in eye development. Involved in targeted recruitment of dia/diaphanous to apical membranes of polarized epithelial cells. This chain is Ras-like GTP-binding protein Rho1, found in Drosophila melanogaster (Fruit fly).